A 518-amino-acid chain; its full sequence is Membrane-bound lytic murein transglycosylase F (518 aa).

Positions 1-21 are cleaved as a signal peptide; it reads MKKLKINYLFIGILALLLAVA. Positions 22–269 are non-LT domain; that stretch reads LWPSIPWFGK…RIEEKYLGHG (248 aa). The interval 270 to 518 is LT domain; it reads DDFDYVDTRT…SRKGSEEKQN (249 aa). Residue Glu314 is part of the active site.

In the N-terminal section; belongs to the bacterial solute-binding protein 3 family. This sequence in the C-terminal section; belongs to the transglycosylase Slt family.

It is found in the cell outer membrane. The catalysed reaction is Exolytic cleavage of the (1-&gt;4)-beta-glycosidic linkage between N-acetylmuramic acid (MurNAc) and N-acetylglucosamine (GlcNAc) residues in peptidoglycan, from either the reducing or the non-reducing ends of the peptidoglycan chains, with concomitant formation of a 1,6-anhydrobond in the MurNAc residue.. Functionally, murein-degrading enzyme that degrades murein glycan strands and insoluble, high-molecular weight murein sacculi, with the concomitant formation of a 1,6-anhydromuramoyl product. Lytic transglycosylases (LTs) play an integral role in the metabolism of the peptidoglycan (PG) sacculus. Their lytic action creates space within the PG sacculus to allow for its expansion as well as for the insertion of various structures such as secretion systems and flagella. The sequence is that of Membrane-bound lytic murein transglycosylase F from Shigella dysenteriae serotype 1 (strain Sd197).